The following is a 439-amino-acid chain: Deacetylvindoline O-acetyltransferase (439 aa).

His158 serves as the catalytic Proton acceptor. The stretch at 317-344 (TKLVINELRKEKQKIKNLSREKLTYVAQ) forms a coiled coil. Catalysis depends on Asp380, which acts as the Proton acceptor.

It belongs to the plant acyltransferase family. Monomer. As to expression, predominantly expressed in young leaves of mature plants. Low expression in stems and flowers and not detected in roots. Confined to the laticifer and idioblast cells of leaves, stems, and flower buds.

Its subcellular location is the cytoplasm. It is found in the nucleus. The catalysed reaction is 4-O-deacetylvindoline + acetyl-CoA = vindoline + CoA. The protein operates within alkaloid biosynthesis; vindoline biosynthesis. Its function is as follows. Involved in the biosynthesis of vindoline, a precursor of vinblastine and vincristine. The protein is Deacetylvindoline O-acetyltransferase of Catharanthus roseus (Madagascar periwinkle).